The sequence spans 314 residues: Cytochrome bo(3) ubiquinol oxidase subunit 2 (314 aa).

The signal sequence occupies residues 1–23; the sequence is MSKKRYPRLFGILPFLGMLLLSG. Cys-24 carries N-palmitoyl cysteine lipidation. Cys-24 is lipidated: S-diacylglycerol cysteine. The Periplasmic portion of the chain corresponds to 24 to 42; that stretch reads CNWTLLDPKGQVGIEQKNL. The chain crosses the membrane as a helical span at residues 43–63; it reads ILIATGLMLLVVIPVIIMTVV. Topologically, residues 64–86 are cytoplasmic; it reads FAWKYRASNKAATYTPDWSHSTK. The helical transmembrane segment at 87-107 threads the bilayer; sequence IEAAVWIIPILIIIALGYFTY. The Periplasmic segment spans residues 108 to 314; the sequence is HSTHKLDPYR…SMQPAAGAEE (207 aa). The segment covering 278-293 has biased composition (basic and acidic residues); it reads YEGMNRGRPSHEEAGS. The segment at 278–314 is disordered; sequence YEGMNRGRPSHEEAGSKDLATTKGVESSMQPAAGAEE.

The protein belongs to the cytochrome c oxidase subunit 2 family. In terms of assembly, heterooctamer of two A chains, two B chains, two C chains and two D chains.

The protein resides in the cell inner membrane. Functionally, cytochrome bo(3) ubiquinol terminal oxidase is the component of the aerobic respiratory chain of E.coli that predominates when cells are grown at high aeration. Has proton pump activity across the membrane in addition to electron transfer, pumping 2 protons/electron. This chain is Cytochrome bo(3) ubiquinol oxidase subunit 2 (cyoA), found in Pseudomonas putida (Arthrobacter siderocapsulatus).